Consider the following 262-residue polypeptide: Putative hydro-lyase cu1581 (262 aa).

This sequence belongs to the D-glutamate cyclase family.

In Corynebacterium urealyticum (strain ATCC 43042 / DSM 7109), this protein is Putative hydro-lyase cu1581.